The following is a 394-amino-acid chain: Protein NDRG1 (394 aa).

Serine 2 carries the N-acetylserine modification. A phosphoserine mark is found at serine 2, serine 319, and serine 326. The interval 325 to 394 (RSRTASGSSV…AGPKSMEVSC (70 aa)) is disordered. Positions 327–339 (RTASGSSVTSLDG) are enriched in polar residues. A Phosphothreonine; by SGK1 modification is found at threonine 328. Serine 330 and serine 332 each carry phosphoserine; by SGK1. The residue at position 333 (serine 333) is a Phosphoserine. At threonine 335 the chain carries Phosphothreonine. Residue serine 336 is modified to Phosphoserine. Tandem repeats lie at residues 339-348 (GTRSRSHTSE), 349-358 (GTRSRSHTSE), and 359-368 (GTRSRSHTSE). Residues 339–368 (GTRSRSHTSEGTRSRSHTSEGTRSRSHTSE) form a 3 X 10 AA tandem repeats of G-T-R-S-R-S-H-T-S-E region. A Phosphothreonine modification is found at threonine 340. Serine 342 is subject to Phosphoserine. The segment covering 345-371 (HTSEGTRSRSHTSEGTRSRSHTSEGAH) has biased composition (basic and acidic residues). Threonine 346 bears the Phosphothreonine; by SGK1 mark. The residue at position 352 (serine 352) is a Phosphoserine. Threonine 356 is subject to Phosphothreonine; by SGK1. Residue serine 362 is modified to Phosphoserine. Serine 364 is modified (phosphoserine; by SGK1). Residue threonine 366 is modified to Phosphothreonine; by SGK1. Position 375 is a phosphothreonine (threonine 375).

The protein belongs to the NDRG family. As to quaternary structure, interacts with RAB4A (membrane-bound form); the interaction involves NDRG1 in vesicular recycling of CDH1. Post-translationally, under stress conditions, phosphorylated in the C-terminal on many serine and threonine residues. Phosphorylated in vitro by PKA. Phosphorylation enhanced by increased intracellular cAMP levels. Homocysteine induces dephosphorylation. Phosphorylation by SGK1 is cell cycle dependent. Ubiquitous; expressed most prominently in placental membranes and prostate, kidney, small intestine, and ovary tissues. Also expressed in heart, brain, skeletal muscle, lung, liver and pancreas. Low levels in peripheral blood leukocytes and in tissues of the immune system. Expressed mainly in epithelial cells. Also found in Schwann cells of peripheral neurons. Reduced expression in adenocarcinomas compared to normal tissues. In colon, prostate and placental membranes, the cells that border the lumen show the highest expression.

The protein resides in the cytoplasm. It localises to the cytosol. The protein localises to the cytoskeleton. Its subcellular location is the microtubule organizing center. It is found in the centrosome. The protein resides in the nucleus. It localises to the cell membrane. In terms of biological role, stress-responsive protein involved in hormone responses, cell growth, and differentiation. Acts as a tumor suppressor in many cell types. Necessary but not sufficient for p53/TP53-mediated caspase activation and apoptosis. Has a role in cell trafficking, notably of the Schwann cell, and is necessary for the maintenance and development of the peripheral nerve myelin sheath. Required for vesicular recycling of CDH1 and TF. May also function in lipid trafficking. Protects cells from spindle disruption damage. Functions in p53/TP53-dependent mitotic spindle checkpoint. Regulates microtubule dynamics and maintains euploidy. This chain is Protein NDRG1 (NDRG1), found in Homo sapiens (Human).